Reading from the N-terminus, the 306-residue chain is UDP-3-O-acyl-N-acetylglucosamine deacetylase (306 aa).

The Zn(2+) site is built by histidine 79, histidine 238, and aspartate 242. Histidine 265 functions as the Proton donor in the catalytic mechanism.

This sequence belongs to the LpxC family. Zn(2+) is required as a cofactor.

The enzyme catalyses a UDP-3-O-[(3R)-3-hydroxyacyl]-N-acetyl-alpha-D-glucosamine + H2O = a UDP-3-O-[(3R)-3-hydroxyacyl]-alpha-D-glucosamine + acetate. The protein operates within glycolipid biosynthesis; lipid IV(A) biosynthesis; lipid IV(A) from (3R)-3-hydroxytetradecanoyl-[acyl-carrier-protein] and UDP-N-acetyl-alpha-D-glucosamine: step 2/6. Catalyzes the hydrolysis of UDP-3-O-myristoyl-N-acetylglucosamine to form UDP-3-O-myristoylglucosamine and acetate, the committed step in lipid A biosynthesis. This Shewanella sp. (strain ANA-3) protein is UDP-3-O-acyl-N-acetylglucosamine deacetylase.